Reading from the N-terminus, the 432-residue chain is Solute carrier family 35 member F5 (432 aa).

The N-terminal stretch at 1 to 33 (MFLPSTTNHSSAPLQKHLCLFCTFWALLFGSHG) is a signal peptide. At Ser116 the chain carries Phosphoserine. 8 helical membrane passes run 152–172 (ISFFFCFVWFLANLSYQEALS), 177–197 (AIVNILSSTSGLFTLILAAVF), 205–225 (FTLSKLLAVILSIGGVVLVNL), 236–256 (TIGSIWSLAGAMLYAVYIVMI), 270–290 (MFFGFVGLFNLLLLWPGFFLL), 304–324 (VVLMCIIINGLIGTVLSEFLW), 329–349 (FLTSSLIGTLALSLTIPLSII), and 361–381 (WLFFAGAIPVFFSFFIVTLLC). Residues 161 to 225 (FLANLSYQEA…SIGGVVLVNL (65 aa)) form the EamA domain.

It belongs to the SLC35F solute transporter family.

It is found in the membrane. In terms of biological role, putative solute transporter. This chain is Solute carrier family 35 member F5 (SLC35F5), found in Macaca fascicularis (Crab-eating macaque).